Here is a 307-residue protein sequence, read N- to C-terminus: Ribonuclease Z (307 aa).

Zn(2+) contacts are provided by H62, H64, D66, H67, H139, D210, and H268. D66 acts as the Proton acceptor in catalysis.

The protein belongs to the RNase Z family. Homodimer. Requires Zn(2+) as cofactor.

The enzyme catalyses Endonucleolytic cleavage of RNA, removing extra 3' nucleotides from tRNA precursor, generating 3' termini of tRNAs. A 3'-hydroxy group is left at the tRNA terminus and a 5'-phosphoryl group is left at the trailer molecule.. In terms of biological role, zinc phosphodiesterase, which displays some tRNA 3'-processing endonuclease activity. Probably involved in tRNA maturation, by removing a 3'-trailer from precursor tRNA. This chain is Ribonuclease Z, found in Myxococcus xanthus (strain DK1622).